We begin with the raw amino-acid sequence, 273 residues long: Putative phosphoenolpyruvate synthase regulatory protein (273 aa).

Residue 153–160 (AVSRAGKT) participates in ADP binding.

It belongs to the pyruvate, phosphate/water dikinase regulatory protein family. PSRP subfamily.

It catalyses the reaction [pyruvate, water dikinase] + ADP = [pyruvate, water dikinase]-phosphate + AMP + H(+). It carries out the reaction [pyruvate, water dikinase]-phosphate + phosphate + H(+) = [pyruvate, water dikinase] + diphosphate. Bifunctional serine/threonine kinase and phosphorylase involved in the regulation of the phosphoenolpyruvate synthase (PEPS) by catalyzing its phosphorylation/dephosphorylation. The polypeptide is Putative phosphoenolpyruvate synthase regulatory protein (Xylella fastidiosa (strain 9a5c)).